An 80-amino-acid chain; its full sequence is Histone H1.M6.1 (80 aa).

The segment at 1-80 is disordered; the sequence is MSDAAVPPKK…KAVKKAPKKK (80 aa). The segment covering 11-80 has biased composition (basic residues); it reads ASPKKAAAKK…KAVKKAPKKK (70 aa).

Its subcellular location is the nucleus. It is found in the chromosome. This chain is Histone H1.M6.1, found in Trypanosoma cruzi.